Reading from the N-terminus, the 305-residue chain is Protoheme IX farnesyltransferase 1 (305 aa).

9 helical membrane-spanning segments follow: residues 30-50 (IGIVNSNLVTTFTGMWLAFQF), 59-79 (LDVILFTMLGAALIIGGSGAM), 108-128 (FVLTIALSFLIVGEILLFAAS), 129-149 (FAAGMWGLAGIFAYVVLYSMW), 154-176 (HVSNTVVGSISGAIPPIIGFAAV), 180-202 (LGPGALALFLIMFAWQPPHFYAL), 232-252 (LFWILLLLPLPFLLPELGIGF), 253-273 (LTLATALNLGWLILALKGFTA), and 284-304 (FIYSLNHMTILFVSIIIFAVF).

This sequence belongs to the UbiA prenyltransferase family. Protoheme IX farnesyltransferase subfamily. In terms of assembly, interacts with CtaA.

The protein localises to the cell membrane. The enzyme catalyses heme b + (2E,6E)-farnesyl diphosphate + H2O = Fe(II)-heme o + diphosphate. Its pathway is porphyrin-containing compound metabolism; heme O biosynthesis; heme O from protoheme: step 1/1. Converts heme B (protoheme IX) to heme O by substitution of the vinyl group on carbon 2 of heme B porphyrin ring with a hydroxyethyl farnesyl side group. This is Protoheme IX farnesyltransferase 1 from Lysinibacillus sphaericus (strain C3-41).